We begin with the raw amino-acid sequence, 536 residues long: Lipid scramblase CLPTM1L (536 aa).

The Cytoplasmic portion of the chain corresponds to 1 to 9 (MLSRSSFTS). Residues 10-30 (LAVGVFAVYVAHTCWVMYGIV) form a helical membrane-spanning segment. Topologically, residues 31–284 (YTRPCPSGGA…VKGIFVDTNL (254 aa)) are extracellular. Residues Asn92, Asn102, and Asn229 are each glycosylated (N-linked (GlcNAc...) asparagine). Residues 285 to 305 (YFLALTFFVAAFHLLFDFLAF) traverse the membrane as a helical segment. Topologically, residues 306 to 324 (KNDISFWKKKRSMIGMSTK) are cytoplasmic. The chain crosses the membrane as a helical span at residues 325–342 (AVLWRCFSTVVIFLFLLD). Residues 343–346 (EQTS) lie on the Extracellular side of the membrane. A helical membrane pass occupies residues 347–364 (LLVLIPAGIGAVIELWKV). Topologically, residues 365 to 402 (KKALKMTVKWQGIRPKVQFGASNDSEKKTEEYDTQAMK) are cytoplasmic. A helical membrane pass occupies residues 403–423 (YLSYLLYPLCIGGAAYSLLNV). Residues 424 to 428 (KYKSW) are Extracellular-facing. Residues 429–449 (YSWLINSFVNGVYAFGFLFML) traverse the membrane as a helical segment. Topologically, residues 450 to 536 (PQLFVNYKMK…YEEKPKKKSS (87 aa)) are cytoplasmic.

The protein belongs to the CLPTM1 family.

It is found in the endoplasmic reticulum membrane. It catalyses the reaction a 6-(alpha-D-glucosaminyl)-1-(1,2-diacyl-sn-glycero-3-phospho)-1D-myo-inositol(in) = a 6-(alpha-D-glucosaminyl)-1-(1,2-diacyl-sn-glycero-3-phospho)-1D-myo-inositol(out). It carries out the reaction 6-(alpha-D-glucosaminyl)-(1-octadecanoyl,2-(9Z)-octadecenoyl-sn-glycero-3-phospho)-1D-myo-inositol(in) = 6-(alpha-D-glucosaminyl)-(1-octadecanoyl,2-(9Z)-octadecenoyl-sn-glycero-3-phospho)-1D-myo-inositol(out). The catalysed reaction is a 1,2-diacyl-sn-glycero-3-phospho-(1D-myo-inositol)(in) = a 1,2-diacyl-sn-glycero-3-phospho-(1D-myo-inositol)(out). The enzyme catalyses a 1,2-diacyl-sn-glycero-3-phosphocholine(in) = a 1,2-diacyl-sn-glycero-3-phosphocholine(out). It catalyses the reaction a 1,2-diacyl-sn-glycero-3-phosphoethanolamine(in) = a 1,2-diacyl-sn-glycero-3-phosphoethanolamine(out). Its function is as follows. Scramblase that mediates the translocation of glucosaminylphosphatidylinositol (alpha-D-GlcN-(1-6)-(1,2-diacyl-sn-glycero-3-phospho)-1D-myo-inositol, GlcN-PI) across the endoplasmic reticulum (ER) membrane, from the cytosolic leaflet to the luminal leaflet of the ER membrane, where it participates in the biosynthesis of glycosylphosphatidylinositol (GPI). GPI is a lipid glycoconjugate involved in post-translational modification of proteins. Can also translocate 1,2-diacyl-sn-glycero-3-phospho-(1D-myo-inositol) (phosphatidylinositol or PI), as well as several other phospholipids (1,2-diacyl-sn-glycero-3-phosphocholine, 1,2-diacyl-sn-glycero-3-phosphoethanolamine), and N-acetylglucosaminylphosphatidylinositol (GlcNAc-PI) in vitro. The chain is Lipid scramblase CLPTM1L (CLPTM1L) from Gallus gallus (Chicken).